Here is a 224-residue protein sequence, read N- to C-terminus: Small ribosomal subunit protein uS7 (224 aa).

This sequence belongs to the universal ribosomal protein uS7 family. In terms of assembly, part of the 30S ribosomal subunit.

Functionally, one of the primary rRNA binding proteins, it binds directly to 16S rRNA where it nucleates assembly of the head domain of the 30S subunit. Is located at the subunit interface close to the decoding center. The sequence is that of Small ribosomal subunit protein uS7 from Caldivirga maquilingensis (strain ATCC 700844 / DSM 13496 / JCM 10307 / IC-167).